Consider the following 285-residue polypeptide: Ribosomal RNA small subunit methyltransferase A (285 aa).

Residues asparagine 30, leucine 32, glycine 57, glutamate 78, aspartate 101, and asparagine 121 each coordinate S-adenosyl-L-methionine.

The protein belongs to the class I-like SAM-binding methyltransferase superfamily. rRNA adenine N(6)-methyltransferase family. RsmA subfamily.

It is found in the cytoplasm. The enzyme catalyses adenosine(1518)/adenosine(1519) in 16S rRNA + 4 S-adenosyl-L-methionine = N(6)-dimethyladenosine(1518)/N(6)-dimethyladenosine(1519) in 16S rRNA + 4 S-adenosyl-L-homocysteine + 4 H(+). Specifically dimethylates two adjacent adenosines (A1518 and A1519) in the loop of a conserved hairpin near the 3'-end of 16S rRNA in the 30S particle. May play a critical role in biogenesis of 30S subunits. The polypeptide is Ribosomal RNA small subunit methyltransferase A (Treponema pallidum (strain Nichols)).